The primary structure comprises 160 residues: Sec-independent protein translocase protein TatB (160 aa).

Residues 1–21 (MFGMGFFEILVVLIVAIIFLG) traverse the membrane as a helical segment. The disordered stretch occupies residues 118-160 (HLNEEVSNEEALNKEVSSDESPKEVQLTTDNNAKEHDKEKEHV). Composition is skewed to basic and acidic residues over residues 128–140 (ALNK…ESPK) and 149–160 (NAKEHDKEKEHV).

It belongs to the TatB family. In terms of assembly, the Tat system comprises two distinct complexes: a TatABC complex, containing multiple copies of TatA, TatB and TatC subunits, and a separate TatA complex, containing only TatA subunits. Substrates initially bind to the TatABC complex, which probably triggers association of the separate TatA complex to form the active translocon.

Its subcellular location is the cell inner membrane. In terms of biological role, part of the twin-arginine translocation (Tat) system that transports large folded proteins containing a characteristic twin-arginine motif in their signal peptide across membranes. Together with TatC, TatB is part of a receptor directly interacting with Tat signal peptides. TatB may form an oligomeric binding site that transiently accommodates folded Tat precursor proteins before their translocation. This is Sec-independent protein translocase protein TatB from Helicobacter pylori (strain J99 / ATCC 700824) (Campylobacter pylori J99).